Here is a 330-residue protein sequence, read N- to C-terminus: Aspartate--ammonia ligase (330 aa).

This sequence belongs to the class-II aminoacyl-tRNA synthetase family. AsnA subfamily.

It localises to the cytoplasm. It catalyses the reaction L-aspartate + NH4(+) + ATP = L-asparagine + AMP + diphosphate + H(+). The protein operates within amino-acid biosynthesis; L-asparagine biosynthesis; L-asparagine from L-aspartate (ammonia route): step 1/1. The sequence is that of Aspartate--ammonia ligase from Glaesserella parasuis serovar 5 (strain SH0165) (Haemophilus parasuis).